The following is a 274-amino-acid chain: 2,3,4,5-tetrahydropyridine-2,6-dicarboxylate N-succinyltransferase (274 aa).

Substrate contacts are provided by arginine 105 and aspartate 142.

This sequence belongs to the transferase hexapeptide repeat family. As to quaternary structure, homotrimer.

It localises to the cytoplasm. The enzyme catalyses (S)-2,3,4,5-tetrahydrodipicolinate + succinyl-CoA + H2O = (S)-2-succinylamino-6-oxoheptanedioate + CoA. It participates in amino-acid biosynthesis; L-lysine biosynthesis via DAP pathway; LL-2,6-diaminopimelate from (S)-tetrahydrodipicolinate (succinylase route): step 1/3. The polypeptide is 2,3,4,5-tetrahydropyridine-2,6-dicarboxylate N-succinyltransferase (Methylobacillus flagellatus (strain ATCC 51484 / DSM 6875 / VKM B-1610 / KT)).